The chain runs to 390 residues: MRALQLLVLVLSGLVGAQQQALMDYLERRLLAIEDRISLWHEQTSRYASELREFKQQMVAQLEGLDKSKEALRSELDTVGTRVDRVEREMDYLETQNGAQPCVDVDDKLVEQQVTFVKERNKAKYAKLTDCSDMISSIKAMKILKRVGGAKGMWTKDMGSATGKVYILNGTDDNTVFEFGTVREFTSSQGTSGATTIQLPSAWRGMGHAIYNNHMYYLKQGEEMKLIKFDLQKNIIVDSAVFPVKNQLPVYSLNPETFIDLAVDEEGLWAIYATQENERHISLAKIDPKTLDIQQMWDTPCVRENAEAAFVICGTVYVVYNSKLPSRSRIQCVFDVSDMVNNDEAPHVYFPKRYGTHSSLKYSPVEQLLYAWDDGYQILYKLQLKKKLEV.

Residues 1-17 form the signal peptide; that stretch reads MRALQLLVLVLSGLVGA. Residues 18-91 are a coiled coil; that stretch reads QQQALMDYLE…RVDRVEREMD (74 aa). One can recognise an Olfactomedin-like domain in the interval 130-386; sequence DCSDMISSIK…QILYKLQLKK (257 aa). C131 and C313 are oxidised to a cystine. N169 carries N-linked (GlcNAc...) asparagine glycosylation.

It belongs to the OLFML3 family.

The protein resides in the secreted. Secreted scaffold protein that plays an essential role in dorsoventral patterning during early development. Stabilizes axial formation by restricting chordin (CHRD) activity on the dorsal side. Acts by facilitating the association between the tolloid proteases and their substrate chordin (CHRD), leading to enhance chordin (CHRD) degradation. This chain is Olfactomedin-like protein 3A (olfml3a), found in Danio rerio (Zebrafish).